The primary structure comprises 97 residues: YcgL domain-containing protein Tcr_0238 (97 aa).

Residues 3-87 enclose the YcgL domain; the sequence is LLVSAYKSAK…SEIEKMGDMP (85 aa). The interval 78–97 is disordered; it reads SEIEKMGDMPPPPEHLDNIF.

The polypeptide is YcgL domain-containing protein Tcr_0238 (Hydrogenovibrio crunogenus (strain DSM 25203 / XCL-2) (Thiomicrospira crunogena)).